Consider the following 706-residue polypeptide: Fatty acid oxidation complex subunit alpha (706 aa).

The enoyl-CoA hydratase stretch occupies residues 1–188 (MEKTFNLTRR…KMGLVNDVVP (188 aa)). The segment at 308–706 (RKVKKAVILG…TMAQENAHFF (399 aa)) is 3-hydroxyacyl-CoA dehydrogenase.

It in the N-terminal section; belongs to the enoyl-CoA hydratase/isomerase family. This sequence in the central section; belongs to the 3-hydroxyacyl-CoA dehydrogenase family. In terms of assembly, heterotetramer of two alpha chains (FadJ) and two beta chains (FadI).

It is found in the cytoplasm. It carries out the reaction a (3S)-3-hydroxyacyl-CoA = a (2E)-enoyl-CoA + H2O. The enzyme catalyses a 4-saturated-(3S)-3-hydroxyacyl-CoA = a (3E)-enoyl-CoA + H2O. It catalyses the reaction a (3S)-3-hydroxyacyl-CoA + NAD(+) = a 3-oxoacyl-CoA + NADH + H(+). The catalysed reaction is (3S)-3-hydroxybutanoyl-CoA = (3R)-3-hydroxybutanoyl-CoA. Its pathway is lipid metabolism; fatty acid beta-oxidation. Catalyzes the formation of a hydroxyacyl-CoA by addition of water on enoyl-CoA. Also exhibits 3-hydroxyacyl-CoA epimerase and 3-hydroxyacyl-CoA dehydrogenase activities. This is Fatty acid oxidation complex subunit alpha from Shewanella baltica (strain OS155 / ATCC BAA-1091).